Reading from the N-terminus, the 593-residue chain is Proteasome-associated ATPase (593 aa).

The stretch at 5-94 (DDADSRAARW…KEEIDRLAQP (90 aa)) forms a coiled coil. 281-286 (GCGKTL) serves as a coordination point for ATP. Residues 574–593 (GKGADAGRSIETASNTGQYL) form a disordered region. The segment covering 584–593 (ETASNTGQYL) has biased composition (polar residues). Positions 592–593 (YL) are docks into pockets in the proteasome alpha-ring.

This sequence belongs to the AAA ATPase family. In terms of assembly, homohexamer. Assembles into a hexameric ring structure that caps the 20S proteasome core. Strongly interacts with the prokaryotic ubiquitin-like protein Pup through a hydrophobic interface; the interacting region of ARC lies in its N-terminal coiled-coil domain. There is one Pup binding site per ARC hexamer ring. Upon ATP-binding, the C-terminus of ARC interacts with the alpha-rings of the proteasome core, possibly by binding to the intersubunit pockets.

Its pathway is protein degradation; proteasomal Pup-dependent pathway. In terms of biological role, ATPase which is responsible for recognizing, binding, unfolding and translocation of pupylated proteins into the bacterial 20S proteasome core particle. May be essential for opening the gate of the 20S proteasome via an interaction with its C-terminus, thereby allowing substrate entry and access to the site of proteolysis. Thus, the C-termini of the proteasomal ATPase may function like a 'key in a lock' to induce gate opening and therefore regulate proteolysis. The chain is Proteasome-associated ATPase from Salinispora tropica (strain ATCC BAA-916 / DSM 44818 / JCM 13857 / NBRC 105044 / CNB-440).